The sequence spans 358 residues: 2-oxoisovalerate dehydrogenase subunit beta 2, mitochondrial (358 aa).

A mitochondrion-targeting transit peptide spans 1 to 16 (MAAALVRRFCRGSSFP). Tyrosine 119 contacts thiamine diphosphate. Residues glycine 145, leucine 147, threonine 148, aspartate 198, and asparagine 200 each coordinate K(+).

In terms of assembly, heterotetramer of alpha and beta chains. The cofactor is thiamine diphosphate. Expressed in the non-photosynthetic organs such as siliques, flowers and roots.

The protein localises to the mitochondrion matrix. The catalysed reaction is N(6)-[(R)-lipoyl]-L-lysyl-[protein] + 3-methyl-2-oxobutanoate + H(+) = N(6)-[(R)-S(8)-2-methylpropanoyldihydrolipoyl]-L-lysyl-[protein] + CO2. Its function is as follows. The branched-chain alpha-keto dehydrogenase complex catalyzes the overall conversion of alpha-keto acids to acyl-CoA and CO(2). It contains multiple copies of three enzymatic components: branched-chain alpha-keto acid decarboxylase (E1), lipoamide acyltransferase (E2) and lipoamide dehydrogenase (E3). Required during sugar starvation and acts under the control of a sugar-sensing mechanism involving Ser/Thr kinases and phosphatases. The sequence is that of 2-oxoisovalerate dehydrogenase subunit beta 2, mitochondrial (DIN4) from Arabidopsis thaliana (Mouse-ear cress).